The sequence spans 683 residues: Acetyl-coenzyme A synthetase 2 (683 aa).

CoA contacts are provided by residues 206-209 and T325; that span reads RGGK. Residues 401-403 and 425-430 contribute to the ATP site; these read GEP and DTMWQT. 425–430 is a binding site for AMP; it reads DTMWQT. K506 is covalently cross-linked (Glycyl lysine isopeptide (Lys-Gly) (interchain with G-Cter in ubiquitin)). The ATP site is built by D516 and R531. D516 and R531 together coordinate AMP. S539 serves as a coordination point for CoA. Position 542 (R542) interacts with ATP. Residue R612 coordinates CoA. S679 carries the phosphoserine modification.

Belongs to the ATP-dependent AMP-binding enzyme family.

The protein resides in the cytoplasm. The protein localises to the nucleus. The enzyme catalyses acetate + ATP + CoA = acetyl-CoA + AMP + diphosphate. It functions in the pathway carbohydrate metabolism; pyruvate metabolism. Catalyzes the production of acetyl-CoA. Provides the acetyl-CoA source for histone acetylation in the nucleus. 'Anaerobic' isozyme of acetyl-coenzyme A synthetase, which is required for growth on fermentable carbon sources such as glucose. May be involved in the PDH (pyruvate dehydrogenase complex) bypass. The polypeptide is Acetyl-coenzyme A synthetase 2 (Saccharomyces cerevisiae (strain ATCC 204508 / S288c) (Baker's yeast)).